Reading from the N-terminus, the 533-residue chain is Putative adhesin domain-containing protein LiaX (533 aa).

The interval 1–277 (MKERERVLEL…EFNYPNPQAS (277 aa)) is binds the antibiotic daptomycin (DAP) and the antimicrobial peptide human LL-37, under physiologically relevant concentrations. Protects the OG1RF and S613 strains from LL-37-mediated killing in a concentration-dependent manner. Positions 63-89 (NALEKGESEGPTVDSFEENTQDSAEKD) are disordered. Positions 83-186 (QDSAEKDREN…EEELKNIRKE (104 aa)) form a coiled coil. The putative adhesin region stretch occupies residues 279 to 526 (IDVKVANGTV…INASTTTGSI (248 aa)). Positions 289 to 526 (VFKTWDQEDV…INASTTTGSI (238 aa)) are involved in cell membrane remodeling.

May undergo proteolytic cleavage, allowing release of the N-terminal region into the extracellular environment.

It is found in the secreted. It localises to the cell wall. Its subcellular location is the cell membrane. In terms of biological role, involved in cell membrane remodeling, perhaps acting by negative modulation of the liaFSR and liaXYZ gene clusters, thereby regulating content and localization of anionic phospholipids. Binds to the antibiotic daptomycin (DAP) and to cationic antimicrobial peptides, such as human LL-37, perhaps functioning as a sensor that activates the cell envelope stress response. This Enterococcus faecalis (strain ATCC 700802 / V583) protein is Putative adhesin domain-containing protein LiaX.